The chain runs to 376 residues: Phosphate acyltransferase (376 aa).

The segment at 334–376 is disordered; the sequence is AGSLEQAKRDAGGPGSASQMASPIAGPVSGQPAEPYSAQSSKA.

Belongs to the PlsX family. Homodimer. Probably interacts with PlsY.

The protein resides in the cytoplasm. The catalysed reaction is a fatty acyl-[ACP] + phosphate = an acyl phosphate + holo-[ACP]. Its pathway is lipid metabolism; phospholipid metabolism. Catalyzes the reversible formation of acyl-phosphate (acyl-PO(4)) from acyl-[acyl-carrier-protein] (acyl-ACP). This enzyme utilizes acyl-ACP as fatty acyl donor, but not acyl-CoA. This chain is Phosphate acyltransferase, found in Paraburkholderia phymatum (strain DSM 17167 / CIP 108236 / LMG 21445 / STM815) (Burkholderia phymatum).